The sequence spans 257 residues: Hydroxyacylglutathione hydrolase (257 aa).

Residues His-54, His-56, Asp-58, His-59, His-113, Asp-137, and His-175 each contribute to the Zn(2+) site.

Belongs to the metallo-beta-lactamase superfamily. Glyoxalase II family. In terms of assembly, monomer. Zn(2+) is required as a cofactor.

The catalysed reaction is an S-(2-hydroxyacyl)glutathione + H2O = a 2-hydroxy carboxylate + glutathione + H(+). It participates in secondary metabolite metabolism; methylglyoxal degradation; (R)-lactate from methylglyoxal: step 2/2. Thiolesterase that catalyzes the hydrolysis of S-D-lactoyl-glutathione to form glutathione and D-lactic acid. The sequence is that of Hydroxyacylglutathione hydrolase from Microcystis aeruginosa (strain NIES-843 / IAM M-2473).